The chain runs to 380 residues: tRNA-specific 2-thiouridylase MnmA (380 aa).

ATP-binding positions include 26–33 (AMSGGVDS) and L52. C120 serves as the catalytic Nucleophile. Residues C120 and C217 are joined by a disulfide bond. G144 is a binding site for ATP. The tract at residues 166–168 (RDQ) is interaction with tRNA. C217 acts as the Cysteine persulfide intermediate in catalysis.

It belongs to the MnmA/TRMU family.

The protein resides in the cytoplasm. The catalysed reaction is S-sulfanyl-L-cysteinyl-[protein] + uridine(34) in tRNA + AH2 + ATP = 2-thiouridine(34) in tRNA + L-cysteinyl-[protein] + A + AMP + diphosphate + H(+). In terms of biological role, catalyzes the 2-thiolation of uridine at the wobble position (U34) of tRNA, leading to the formation of s(2)U34. This chain is tRNA-specific 2-thiouridylase MnmA, found in Jannaschia sp. (strain CCS1).